The following is a 25-amino-acid chain: Endoglucanase 1 (25 aa).

Positions 1 to 25 (YDASLKPNLQIPQKNIPNNDAVNIK) are disordered. Residues 10–25 (QIPQKNIPNNDAVNIK) are compositionally biased toward polar residues.

It carries out the reaction Endohydrolysis of (1-&gt;4)-beta-D-glucosidic linkages in cellulose, lichenin and cereal beta-D-glucans.. Its function is as follows. This enzyme hydrolyzes cellotetraose, cellopentaose, and cellohexaose to cellobiose and cellotriose but does not hydrolyze cellobiose or cellotriose. This Ruminiclostridium josui (Clostridium josui) protein is Endoglucanase 1.